Here is a 352-residue protein sequence, read N- to C-terminus: Ribosome biogenesis protein BRX1 homolog (352 aa).

A disordered region spans residues 1–55 (MGKFSKIKKVQEEESAHQKMEWEAAGAKDSSSDDSSDESDNDDQPKQATEETRKR). A compositionally biased stretch (basic and acidic residues) spans 9–22 (KVQEEESAHQKMEW). Acidic residues predominate over residues 32–42 (SDDSSDESDND). The segment covering 43–55 (DQPKQATEETRKR) has biased composition (basic and acidic residues). A Brix domain is found at 63 to 253 (ERVLVLCSRG…MVRLFAGSFE (191 aa)).

This sequence belongs to the BRX1 family.

The protein resides in the nucleus. Its subcellular location is the nucleolus. Functionally, required for biogenesis of the 60S ribosomal subunit. The chain is Ribosome biogenesis protein BRX1 homolog from Caenorhabditis elegans.